The primary structure comprises 396 residues: DNA polymerase IV (396 aa).

A UmuC domain is found at 2–182 (ILHVDMDAFY…LPVSRLWGVG (181 aa)). Residues aspartate 6 and aspartate 100 each coordinate Mg(2+). Glutamate 101 is an active-site residue.

The protein belongs to the DNA polymerase type-Y family. In terms of assembly, monomer. Requires Mg(2+) as cofactor.

Its subcellular location is the cytoplasm. The enzyme catalyses DNA(n) + a 2'-deoxyribonucleoside 5'-triphosphate = DNA(n+1) + diphosphate. Poorly processive, error-prone DNA polymerase involved in untargeted mutagenesis. Copies undamaged DNA at stalled replication forks, which arise in vivo from mismatched or misaligned primer ends. These misaligned primers can be extended by PolIV. Exhibits no 3'-5' exonuclease (proofreading) activity. May be involved in translesional synthesis, in conjunction with the beta clamp from PolIII. The polypeptide is DNA polymerase IV (Rhodopirellula baltica (strain DSM 10527 / NCIMB 13988 / SH1)).